The sequence spans 421 residues: Polymerase delta-interacting protein 3 (421 aa).

The residue at position 2 (A2) is an N-acetylalanine. Position 5 is a phosphoserine (S5). Position 33 is an omega-N-methylarginine (R33). A phosphoserine mark is found at S44 and S127. The residue at position 140 (T140) is a Phosphothreonine. Residue K200 forms a Glycyl lysine isopeptide (Lys-Gly) (interchain with G-Cter in SUMO2) linkage. S204, S215, and S217 each carry phosphoserine. Residue K223 forms a Glycyl lysine isopeptide (Lys-Gly) (interchain with G-Cter in SUMO2) linkage. S244 carries the post-translational modification Phosphoserine. A Glycyl lysine isopeptide (Lys-Gly) (interchain with G-Cter in SUMO2) cross-link involves residue K248. A Phosphoserine modification is found at S275. The RRM domain maps to 280–351 (TKMTVNNLHP…QPMKCNLHMN (72 aa)). Basic and acidic residues predominate over residues 370–379 (SMKKESELPR). The tract at residues 370 to 393 (SMKKESELPRRVNSASSSNPPAEV) is disordered. K372 is covalently cross-linked (Glycyl lysine isopeptide (Lys-Gly) (interchain with G-Cter in SUMO2)). A phosphoserine; by RPS6KB1 mark is found at S383 and S385. K418 participates in a covalent cross-link: Glycyl lysine isopeptide (Lys-Gly) (interchain with G-Cter in SUMO2).

In terms of assembly, interacts with POLD2. Interacts with NCBP1 and EIF4A3. Associates with the multiprotein exon junction complex (EJC). Interacts with RPS6KB1 (activated). Interacts with ERH. Interacts with THOC2, DDX39B and ZC3H11A; the interactions are ATP-dependent and indicative for an association with the TREX complex. Phosphorylated at Ser-383 and Ser-385 by RPS6KB1.

The protein resides in the nucleus. It localises to the nucleus speckle. Its subcellular location is the cytoplasm. In terms of biological role, is involved in regulation of translation. Is preferentially associated with CBC-bound spliced mRNA-protein complexes during the pioneer round of mRNA translation. Contributes to enhanced translational efficiency of spliced over nonspliced mRNAs. Recruits activated ribosomal protein S6 kinase beta-1 I/RPS6KB1 to newly synthesized mRNA. Involved in nuclear mRNA export; probably mediated by association with the TREX complex. The chain is Polymerase delta-interacting protein 3 (POLDIP3) from Homo sapiens (Human).